We begin with the raw amino-acid sequence, 395 residues long: 8-amino-7-oxononanoate synthase/2-amino-3-ketobutyrate coenzyme A ligase (395 aa).

A pyridoxal 5'-phosphate-binding site is contributed by 110 to 111; that stretch reads GF. His135 provides a ligand contact to substrate. Pyridoxal 5'-phosphate-binding positions include Ser182, 207-210, and 239-242; these read DDAH and TLSK. Residue Lys242 is modified to N6-(pyridoxal phosphate)lysine. Residue Thr356 participates in substrate binding.

Belongs to the class-II pyridoxal-phosphate-dependent aminotransferase family. In terms of assembly, homodimer. Pyridoxal 5'-phosphate is required as a cofactor.

The enzyme catalyses 6-carboxyhexanoyl-[ACP] + L-alanine + H(+) = (8S)-8-amino-7-oxononanoate + holo-[ACP] + CO2. It carries out the reaction glycine + acetyl-CoA = (2S)-2-amino-3-oxobutanoate + CoA. It functions in the pathway cofactor biosynthesis; biotin biosynthesis. Its function is as follows. Catalyzes the decarboxylative condensation of pimeloyl-[acyl-carrier protein] and L-alanine to produce 8-amino-7-oxononanoate (AON), [acyl-carrier protein], and carbon dioxide. Can also use pimeloyl-CoA instead of pimeloyl-ACP as substrate. It also converts 2-amino-3-ketobutyrate and CoA to glycine and acetyl-CoA. Activity is also observed with the following combinations of substrates: acetyl-CoA and either L-alanine or L-serine, pimeloyl-CoA and either glycine or L-serine, and palmitoyl-CoA with L-alanine. The sequence is that of 8-amino-7-oxononanoate synthase/2-amino-3-ketobutyrate coenzyme A ligase from Thermus thermophilus (strain ATCC 27634 / DSM 579 / HB8).